The sequence spans 342 residues: uncharacterized protein (342 aa).

It belongs to the cycloisomerase 2 family.

This is an uncharacterized protein from Staphylococcus aureus (strain MSSA476).